Consider the following 530-residue polypeptide: Glutamate--cysteine ligase (530 aa).

Belongs to the glutamate--cysteine ligase type 1 family. Type 1 subfamily.

It catalyses the reaction L-cysteine + L-glutamate + ATP = gamma-L-glutamyl-L-cysteine + ADP + phosphate + H(+). It functions in the pathway sulfur metabolism; glutathione biosynthesis; glutathione from L-cysteine and L-glutamate: step 1/2. The protein is Glutamate--cysteine ligase of Saccharophagus degradans (strain 2-40 / ATCC 43961 / DSM 17024).